Reading from the N-terminus, the 220-residue chain is MFKQIDENYLRKEHFHHYMTLTRCSYSLVINLDITKLHAILKEKKLKVYPVQIYLLARAVQKIPEFRMDQVNDELGYWEILHPSYTILNKETKTFSSIWTPFDENFAQFYKSCVADIETFSKSSNLFPKPHMPENMFNISSLPWIDFTSFNLNVSTDEAYLLPIFTIGKFKVEEGKIILPVAIQVHHAVCDGYHAGQYVEYLRWLIEHCDEWLNDSLHIT.

The active-site Proton acceptor is the His187.

Belongs to the chloramphenicol acetyltransferase family. In terms of assembly, homotrimer.

It carries out the reaction chloramphenicol + acetyl-CoA = chloramphenicol 3-acetate + CoA. Its function is as follows. This enzyme is an effector of chloramphenicol resistance in bacteria. The sequence is that of Chloramphenicol acetyltransferase (cat86) from Bacillus pumilus (Bacillus mesentericus).